The following is a 682-amino-acid chain: Nisin leader peptide-processing serine protease NisP (682 aa).

The signal sequence occupies residues Met1–Gly22. The propeptide occupies Glu23–Arg195. In terms of domain architecture, Peptidase S8 spans Gln231–Ala566. Active-site charge relay system residues include Asp259, His306, and Ser512. The short motif at Leu652–Gly656 is the LPXTG sorting signal element. Pentaglycyl murein peptidoglycan amidated threonine is present on Thr655. The propeptide at Gly656–Asn682 is removed by sortase.

Belongs to the peptidase S8 family.

The protein localises to the secreted. It is found in the cell wall. It participates in antibiotic biosynthesis; nisin biosynthesis. Its function is as follows. Cleaves the lantibiotic nisin precursor peptide. The polypeptide is Nisin leader peptide-processing serine protease NisP (nisP) (Lactococcus lactis subsp. lactis (Streptococcus lactis)).